The chain runs to 125 residues: Holo-[acyl-carrier-protein] synthase (125 aa).

D8 and E57 together coordinate Mg(2+).

This sequence belongs to the P-Pant transferase superfamily. AcpS family. Requires Mg(2+) as cofactor.

The protein resides in the cytoplasm. The enzyme catalyses apo-[ACP] + CoA = holo-[ACP] + adenosine 3',5'-bisphosphate + H(+). In terms of biological role, transfers the 4'-phosphopantetheine moiety from coenzyme A to a Ser of acyl-carrier-protein. The protein is Holo-[acyl-carrier-protein] synthase of Halothermothrix orenii (strain H 168 / OCM 544 / DSM 9562).